The following is a 119-amino-acid chain: Fluoride-specific ion channel FluC 2 (119 aa).

Transmembrane regions (helical) follow at residues 1–21, 33–53, 56–76, and 93–113; these read MITV…RYGI, FPYA…FIFS, FSPF…TTFS, and VFTL…FLGY. Na(+) contacts are provided by Gly70 and Thr73.

The protein belongs to the fluoride channel Fluc/FEX (TC 1.A.43) family.

The protein resides in the cell membrane. The catalysed reaction is fluoride(in) = fluoride(out). Na(+) is not transported, but it plays an essential structural role and its presence is essential for fluoride channel function. Functionally, fluoride-specific ion channel. Important for reducing fluoride concentration in the cell, thus reducing its toxicity. The protein is Fluoride-specific ion channel FluC 2 of Lactobacillus johnsonii (strain CNCM I-12250 / La1 / NCC 533).